The sequence spans 400 residues: NADH-quinone oxidoreductase subunit D (400 aa).

This sequence belongs to the complex I 49 kDa subunit family. In terms of assembly, NDH-1 is composed of 14 different subunits. Subunits NuoB, C, D, E, F, and G constitute the peripheral sector of the complex.

It localises to the cell inner membrane. It catalyses the reaction a quinone + NADH + 5 H(+)(in) = a quinol + NAD(+) + 4 H(+)(out). In terms of biological role, NDH-1 shuttles electrons from NADH, via FMN and iron-sulfur (Fe-S) centers, to quinones in the respiratory chain. The immediate electron acceptor for the enzyme in this species is believed to be a menaquinone. Couples the redox reaction to proton translocation (for every two electrons transferred, four hydrogen ions are translocated across the cytoplasmic membrane), and thus conserves the redox energy in a proton gradient. The chain is NADH-quinone oxidoreductase subunit D from Chlorobaculum tepidum (strain ATCC 49652 / DSM 12025 / NBRC 103806 / TLS) (Chlorobium tepidum).